Here is a 151-residue protein sequence, read N- to C-terminus: Ribosome maturation factor RimP (151 aa).

This sequence belongs to the RimP family.

Its subcellular location is the cytoplasm. In terms of biological role, required for maturation of 30S ribosomal subunits. In Photobacterium profundum (strain SS9), this protein is Ribosome maturation factor RimP.